Consider the following 400-residue polypeptide: MKLADLSSPAFLENPYPLYETLRRQGSFVSIGPNALMTGRYSIVDGLLHNRNMGKSYMESIRVRYGDDALDMPLFQGFNRMFLMLNPPVHTHLRGLVMQAFTGRESESMRPLATDTAHRLIDDFEQKSSVDLVTEFSFPLPMRIICRMMDVDISDAISLSVAVSNIAKVLDPAPMSPDELVHASAAYEELAHYFTRLIELRRAQPGTDLISMLLRAEEEGQKLTHDEIVSNVILLLLGGYETTSNMIGNALIALHRHPKQLARLKSDLSLMPQAILECLRYDGSVQFTMRAAMDDVSIEGDVVPRGTIVFLMLGAANRDPAQFTDPDHLDITRKQGRLQSFGAGVHHCLGYRLALVELECALTVLLERLPHLRLANLDTLSWNQRGNLRGVNALIADLHS.

Cys-348 is a binding site for heme.

The protein belongs to the cytochrome P450 family. The cofactor is heme.

The sequence is that of Putative cytochrome P450 133B2 (cyp133B2) from Xylella fastidiosa (strain 9a5c).